The primary structure comprises 376 residues: Transcription factor Sp6 (376 aa).

The disordered stretch occupies residues Met1–Pro70. Residues Gly118–Gly126 carry the 9aaTAD motif. The interval His167–Ser223 is disordered. Positions Leu173–Pro186 are enriched in low complexity. 3 consecutive C2H2-type zinc fingers follow at residues His254–His278, Phe284–His308, and Phe314–His336. Positions Met333 to Ala343 are enriched in basic and acidic residues. Residues Met333–Asn376 are disordered.

The protein belongs to the Sp1 C2H2-type zinc-finger protein family. Ubiquitous.

It is found in the nucleus. Functionally, promotes cell proliferation. Plays a role in tooth germ growth. Plays a role in the control of enamel mineralization. Binds the AMBN promoter. This is Transcription factor Sp6 (SP6) from Homo sapiens (Human).